The chain runs to 37 residues: Brevinin-2DYe (37 aa).

C31 and C37 form a disulfide bridge.

As to expression, expressed by the skin glands.

The protein localises to the secreted. In terms of biological role, antimicrobial peptide. Active against the Gram-positive bacterium S.aureus (MIC=15 uM) and the Gram-negative bacterium E.coli (MIC=30 uM). The chain is Brevinin-2DYe from Rana dybowskii (Dybovsky's frog).